The following is a 149-amino-acid chain: Antitoxin HigA1 (149 aa).

The region spanning 42-96 (LIALRKHCQLSQVEVAKRMGVRQPTVSGFEKEPSDPKLSTLQRYARALDARLRLV) is the HTH cro/C1-type domain. Residues 53–72 (QVEVAKRMGVRQPTVSGFEK) constitute a DNA-binding region (H-T-H motif).

Interacts with SecB-like chaperone MT2006.

Functionally, antitoxin component of an atypical, type II toxin-antitoxin chaperone (TAC) system. Probably neutralizes the toxic effects of cognate toxin HigB1, which also requires SecB-like chaperone MT2006 (AC Q7D7P7). Autorepresses its operon (higB1-higA1-MT2006). In Mycobacterium tuberculosis (strain CDC 1551 / Oshkosh), this protein is Antitoxin HigA1.